A 409-amino-acid chain; its full sequence is Histidine--tRNA ligase (409 aa).

The protein belongs to the class-II aminoacyl-tRNA synthetase family.

It localises to the cytoplasm. It carries out the reaction tRNA(His) + L-histidine + ATP = L-histidyl-tRNA(His) + AMP + diphosphate + H(+). This Archaeoglobus fulgidus (strain ATCC 49558 / DSM 4304 / JCM 9628 / NBRC 100126 / VC-16) protein is Histidine--tRNA ligase (hisS).